The sequence spans 380 residues: Tubulin-like protein CetZ (380 aa).

Residues 10-14 (QCGTK), 103-105 (GTG), E136, N163, and N181 contribute to the GTP site. A disordered region spans residues 359 to 380 (PSLEATGSDDPEGFAEYREVSR).

Belongs to the CetZ family.

It localises to the cytoplasm. Involved in cell shape control. This Thermococcus kodakarensis (strain ATCC BAA-918 / JCM 12380 / KOD1) (Pyrococcus kodakaraensis (strain KOD1)) protein is Tubulin-like protein CetZ.